The chain runs to 434 residues: Glutamyl-tRNA reductase (434 aa).

Residues 52 to 55 (TCNR), serine 115, 120 to 122 (ETQ), and glutamine 126 each bind substrate. The active-site Nucleophile is the cysteine 53. 195–200 (GAGEMI) is an NADP(+) binding site.

Belongs to the glutamyl-tRNA reductase family. In terms of assembly, homodimer.

It catalyses the reaction (S)-4-amino-5-oxopentanoate + tRNA(Glu) + NADP(+) = L-glutamyl-tRNA(Glu) + NADPH + H(+). The protein operates within porphyrin-containing compound metabolism; protoporphyrin-IX biosynthesis; 5-aminolevulinate from L-glutamyl-tRNA(Glu): step 1/2. Its function is as follows. Catalyzes the NADPH-dependent reduction of glutamyl-tRNA(Glu) to glutamate 1-semialdehyde (GSA). In Cupriavidus pinatubonensis (strain JMP 134 / LMG 1197) (Cupriavidus necator (strain JMP 134)), this protein is Glutamyl-tRNA reductase.